The chain runs to 425 residues: UDP-N-acetylglucosamine 1-carboxyvinyltransferase (425 aa).

23–24 (KN) is a binding site for phosphoenolpyruvate. Arginine 100 contributes to the UDP-N-acetyl-alpha-D-glucosamine binding site. Catalysis depends on cysteine 124, which acts as the Proton donor. Cysteine 124 bears the 2-(S-cysteinyl)pyruvic acid O-phosphothioketal mark. UDP-N-acetyl-alpha-D-glucosamine-binding residues include aspartate 313 and isoleucine 335.

Belongs to the EPSP synthase family. MurA subfamily.

It is found in the cytoplasm. The enzyme catalyses phosphoenolpyruvate + UDP-N-acetyl-alpha-D-glucosamine = UDP-N-acetyl-3-O-(1-carboxyvinyl)-alpha-D-glucosamine + phosphate. It participates in cell wall biogenesis; peptidoglycan biosynthesis. Cell wall formation. Adds enolpyruvyl to UDP-N-acetylglucosamine. This is UDP-N-acetylglucosamine 1-carboxyvinyltransferase from Wolbachia pipientis wMel.